We begin with the raw amino-acid sequence, 1736 residues long: Hybrid signal transduction histidine kinase I (1736 aa).

Positions 143 to 161 (HNINNNQNNQNSVNINSSN) are enriched in low complexity. The disordered stretch occupies residues 143 to 171 (HNINNNQNNQNSVNINSSNKGQYNRPEPS). Residues 234–286 (FEYPLRINRKNDNLVRYIQLKGEIIKKDDKVFKVLGVCHDFSEIQEAKDKLEE) form the PAC domain. Positions 287–358 (ESKFVEALIG…QINLEKSGTP (72 aa)) constitute a PAS domain. The segment at 378–469 (TSNQQQSSLS…NTTNGIGGAT (92 aa)) is disordered. Low complexity predominate over residues 379–389 (SNQQQSSLSKS). A compositionally biased stretch (polar residues) spans 392-412 (PRSQSNCSNGNKSQNRLSKNY). A compositionally biased stretch (low complexity) spans 413–469 (STTTTTTNNNNNNNNNNNNNNNNNNNNNSISQQQQTQVSTQQTQQQQNTTNGIGGAT). Residues 556–908 (NISHELLSPM…TFHFILSIKS (353 aa)) form the Histidine kinase domain. Phosphohistidine; by autocatalysis is present on His-559. 7 disordered regions span residues 711–821 (NSKT…KREK), 952–971 (TKKV…TNYG), 1080–1124 (NGNN…KQHS), 1157–1258 (PPKS…ILSP), 1277–1301 (SLTP…INNG), 1330–1393 (ASSP…NLSS), and 1419–1520 (SNNL…PPIL). Acidic residues-rich tracts occupy residues 725 to 735 (SIDGDYDDQDN) and 758 to 789 (ELDE…DDDT). Low complexity-rich tracts occupy residues 790–807 (SSNT…FHNN), 961–971 (DNGNNDSTNYG), and 1080–1096 (NGNN…NNNI). Over residues 1097–1117 (QTPNGLNNSRGSSLISTPSTK) the composition is skewed to polar residues. 2 stretches are compositionally biased toward low complexity: residues 1186-1195 (SSPPINSSSS) and 1202-1258 (TNGS…ILSP). Polar residues predominate over residues 1330–1339 (ASSPKQSQRG). Low complexity-rich tracts occupy residues 1340–1376 (YSPK…QQQQ), 1425–1475 (NNNN…STPE), 1482–1492 (SPRSNNNNNCS), and 1506–1520 (SSTI…PPIL). The Response regulatory domain maps to 1551-1674 (KVLVAEDNTM…LLYEVINTQI (124 aa)). Asp-1605 carries the 4-aspartylphosphate modification. The span at 1695–1722 (NNNNNNTNNNNNNNNSSNPVNNNNSNSI) shows a compositional bias: low complexity. A disordered region spans residues 1695–1736 (NNNNNNTNNNNNNNNSSNPVNNNNSNSIDATQQELNNEKIRI).

Post-translationally, activation probably requires transfer of a phosphate group between a histidine in the kinase core (transmitter) domain and an aspartate of the receiver domain.

It catalyses the reaction ATP + protein L-histidine = ADP + protein N-phospho-L-histidine.. Functionally, acts as a receptor histidine kinase for a signal transduction pathway. This protein undergoes an ATP-dependent autophosphorylation at a conserved histidine residue in the kinase core, and a phosphoryl group is then transferred to a conserved aspartate residue in the receiver domain. This Dictyostelium discoideum (Social amoeba) protein is Hybrid signal transduction histidine kinase I (dhkI-1).